We begin with the raw amino-acid sequence, 148 residues long: Endoribonuclease YbeY (148 aa).

Positions 113, 117, and 123 each coordinate Zn(2+).

It belongs to the endoribonuclease YbeY family. Requires Zn(2+) as cofactor.

It is found in the cytoplasm. Its function is as follows. Single strand-specific metallo-endoribonuclease involved in late-stage 70S ribosome quality control and in maturation of the 3' terminus of the 16S rRNA. The sequence is that of Endoribonuclease YbeY from Borrelia turicatae (strain 91E135).